Here is an 819-residue protein sequence, read N- to C-terminus: Nuclear pore complex protein Nup93 (819 aa).

Position 49 is a phosphothreonine (Thr-49). Ser-52, Ser-66, Ser-72, Ser-75, Ser-80, Ser-430, and Ser-767 each carry phosphoserine.

Belongs to the nucleoporin interacting component (NIC) family. Part of the nuclear pore complex (NPC). Component of the p62 complex, a complex composed of NUP62 and NUP54. Forms a complex with NUP35, NUP155, NUP205 and lamin B; the interaction with NUP35 is direct. Does not interact with TPR. Interacts with SMAD4 and IPO7; translocates SMAD4 to the nucleus through the NPC upon BMP7 stimulation resulting in activation of SMAD4 signaling.

It is found in the nucleus membrane. Its subcellular location is the nucleus. The protein localises to the nuclear pore complex. The protein resides in the nucleus envelope. Plays a role in the nuclear pore complex (NPC) assembly and/or maintenance. May anchor nucleoporins, but not NUP153 and TPR, to the NPC. During renal development, regulates podocyte migration and proliferation through SMAD4 signaling. The sequence is that of Nuclear pore complex protein Nup93 (Nup93) from Rattus norvegicus (Rat).